Consider the following 544-residue polypeptide: Chaperonin GroEL 1 (544 aa).

Residues 29–32 (TLGP), 86–90 (DGTTT), glycine 413, 479–481 (NAA), and aspartate 495 contribute to the ATP site.

It belongs to the chaperonin (HSP60) family. In terms of assembly, forms a cylinder of 14 subunits composed of two heptameric rings stacked back-to-back. Interacts with the co-chaperonin GroES.

The protein localises to the cytoplasm. It carries out the reaction ATP + H2O + a folded polypeptide = ADP + phosphate + an unfolded polypeptide.. Together with its co-chaperonin GroES, plays an essential role in assisting protein folding. The GroEL-GroES system forms a nano-cage that allows encapsulation of the non-native substrate proteins and provides a physical environment optimized to promote and accelerate protein folding. The chain is Chaperonin GroEL 1 from Parasynechococcus marenigrum (strain WH8102).